Reading from the N-terminus, the 716-residue chain is DEAD-box ATP-dependent RNA helicase 31 (716 aa).

Residues 99–188 (GILKSDDEDE…LRLEDESSDE (90 aa)) are disordered. Residues 110–121 (DRSRGRNQEKRG) are compositionally biased toward basic and acidic residues. A compositionally biased stretch (polar residues) spans 144 to 153 (SRIQGKSSEA). Basic and acidic residues predominate over residues 155–188 (FRGRKETSFSRDREDEKGLRKREDLRLEDESSDE). The Q motif motif lies at 248 to 276 (TRFDHYPLSPLSLKAIKDAGYETMTVVQE). Residues 279–462 (LPIILKGKDV…LVALRRDHEF (184 aa)) enclose the Helicase ATP-binding domain. 292–299 (AKTGTGKT) serves as a coordination point for ATP. The DEAD box motif lies at 410–413 (DEAD). The region spanning 497–643 (LREHIMGNVD…IDPETVKKVQ (147 aa)) is the Helicase C-terminal domain.

It belongs to the DEAD box helicase family.

The catalysed reaction is ATP + H2O = ADP + phosphate + H(+). In Arabidopsis thaliana (Mouse-ear cress), this protein is DEAD-box ATP-dependent RNA helicase 31 (RH31).